The sequence spans 297 residues: MKRPDYRTLQALDAVIRERGFERAAQKLCITQSAVSQRIKQLENMFGQPLLVRTVPPRPTEQGQKLLALLRQVELLEEEWLGDEQTGSTPLLLSLAVNADSLATWLLPALAPVLADSPIRLNLQVEDETRTQERLRRGEVVGAVSIQHQALPSCLVDKLGALDYLFVSSKPFAEKYFPNGVTRSALLKAPVVAFDHLDDMHQAFLQQNFDLPPGSVPCHIVNSSEAFVQLARQGTTCCMIPHLQIEKELTSGELIDLTPGLFQRRMLYWHRFAPESRMMRKVTDALLDYGHKVLRQD.

The 57-residue stretch at 4–60 (PDYRTLQALDAVIRERGFERAAQKLCITQSAVSQRIKQLENMFGQPLLVRTVPPRPT) folds into the HTH lysR-type domain. The segment at residues 21–40 (FERAAQKLCITQSAVSQRIK) is a DNA-binding region (H-T-H motif).

It belongs to the LysR transcriptional regulatory family. In terms of assembly, homodimer.

In terms of biological role, controls the transcription of genes involved in arginine and lysine metabolism. This Escherichia coli O7:K1 (strain IAI39 / ExPEC) protein is HTH-type transcriptional regulator ArgP.